The primary structure comprises 263 residues: Hydroxyacylglutathione hydrolase (263 aa).

Positions 55, 57, 59, 60, 117, 134, and 172 each coordinate Zn(2+).

The protein belongs to the metallo-beta-lactamase superfamily. Glyoxalase II family. In terms of assembly, monomer. Zn(2+) serves as cofactor.

It carries out the reaction an S-(2-hydroxyacyl)glutathione + H2O = a 2-hydroxy carboxylate + glutathione + H(+). Its pathway is secondary metabolite metabolism; methylglyoxal degradation; (R)-lactate from methylglyoxal: step 2/2. Functionally, thiolesterase that catalyzes the hydrolysis of S-D-lactoyl-glutathione to form glutathione and D-lactic acid. The protein is Hydroxyacylglutathione hydrolase of Shewanella baltica (strain OS185).